A 168-amino-acid polypeptide reads, in one-letter code: 3-isopropylmalate dehydratase small subunit (168 aa).

It belongs to the LeuD family. LeuD type 2 subfamily. In terms of assembly, heterodimer of LeuC and LeuD.

It catalyses the reaction (2R,3S)-3-isopropylmalate = (2S)-2-isopropylmalate. It participates in amino-acid biosynthesis; L-leucine biosynthesis; L-leucine from 3-methyl-2-oxobutanoate: step 2/4. Catalyzes the isomerization between 2-isopropylmalate and 3-isopropylmalate, via the formation of 2-isopropylmaleate. The chain is 3-isopropylmalate dehydratase small subunit (leuD) from Aquifex aeolicus (strain VF5).